Here is a 328-residue protein sequence, read N- to C-terminus: Gonadotropin-releasing hormone receptor (328 aa).

Residues 1-38 (MANSASPEQNQNHCSAINNSIPLMQGNLPTLTLSGKIR) lie on the Extracellular side of the membrane. Asparagine 18 carries N-linked (GlcNAc...) asparagine glycosylation. Residues 39 to 58 (VTVTFFLFLLSATFNASFLL) form a helical membrane-spanning segment. The Cytoplasmic segment spans residues 59–77 (KLQKWTQKKEKGKKLSRMK). A helical membrane pass occupies residues 78 to 97 (LLLKHLTLANLLETLIVMPL). Residues 98–115 (DGMWNITVQWYAGELLCK) lie on the Extracellular side of the membrane. The N-linked (GlcNAc...) asparagine glycan is linked to asparagine 102. A disulfide bond links cysteine 114 and cysteine 196. The chain crosses the membrane as a helical span at residues 116 to 137 (VLSYLKLFSMYAPAFMMVVISL). The Cytoplasmic segment spans residues 138–164 (DRSLAITRPLALKSNSKVGQSMVGLAW). The chain crosses the membrane as a helical span at residues 165 to 184 (ILSSVFAGPQLYIFRMIHLA). Over 185 to 212 (DSSGQTKVFSQCVTHCSFSQWWHQAFYN) the chain is Extracellular. A helical membrane pass occupies residues 213–232 (FFTFSCLFIIPLFIMLICNA). Residues 233-281 (KIIFTLTRVLHQDPHELQLNQSKNNIPRARLKTLKMTVAFATSFTVCWT) lie on the Cytoplasmic side of the membrane. Residues 282 to 300 (PYYVLGIWYWFDPEMLNRL) form a helical membrane-spanning segment. Over 301–306 (SDPVNH) the chain is Extracellular. Residues 307-326 (FFFLFAFLNPCFDPLIYGYF) form a helical membrane-spanning segment. Residues 327–328 (SL) are Cytoplasmic-facing.

Belongs to the G-protein coupled receptor 1 family. In terms of tissue distribution, pituitary, ovary, testis, breast and prostate but not in liver and spleen.

It localises to the cell membrane. Its function is as follows. Receptor for gonadotropin releasing hormone (GnRH) that mediates the action of GnRH to stimulate the secretion of the gonadotropic hormones luteinizing hormone (LH) and follicle-stimulating hormone (FSH). This receptor mediates its action by association with G-proteins that activate a phosphatidylinositol-calcium second messenger system. Isoform 2 may act as an inhibitor of GnRH-R signaling. This chain is Gonadotropin-releasing hormone receptor (GNRHR), found in Homo sapiens (Human).